Consider the following 244-residue polypeptide: MATRLQYENSCDVGVFLKLTNKYCLVGQCGSKQFLHTVENRLADHIPVVETSIAGTRIVGRLSAGNKNGLLLPNTCTDQELQQIRNSLPDDVVVQRIEEKFSALGNCIATNDYVALVHPDIDRETEEIIADVLGVEVFRQTVSGNVLVGTYCALTNQGALVHPMTSIADQDELSSLLQVPLVAGTVNRGNECVAAGCVVNDWTAIVGADTTATEISVIESIFALQGSKPSNIINNIRNSIVDNV.

Belongs to the eIF-6 family. As to quaternary structure, monomer. Associates with the 60S ribosomal subunit.

The protein localises to the cytoplasm. The protein resides in the nucleus. Its subcellular location is the nucleolus. Functionally, binds to the 60S ribosomal subunit and prevents its association with the 40S ribosomal subunit to form the 80S initiation complex in the cytoplasm. May also be involved in ribosome biogenesis. This Dictyostelium discoideum (Social amoeba) protein is Eukaryotic translation initiation factor 6 (eif6).